Reading from the N-terminus, the 520-residue chain is Beta-glucosidase 45 (520 aa).

Positions 1 to 22 are cleaved as a signal peptide; that stretch reads MKNLTSFVIVILLQSLLFHVYG. N-linked (GlcNAc...) asparagine glycosylation occurs at Asn3. A beta-D-glucoside-binding positions include Gln52, His155, and 200 to 201; that span reads NE. Glu201 functions as the Proton donor in the catalytic mechanism. The cysteines at positions 220 and 227 are disulfide-linked. Asn226 carries an N-linked (GlcNAc...) asparagine glycan. Tyr344 contributes to the a beta-D-glucoside binding site. Residues Cys352 and Cys357 are joined by a disulfide bond. Residue Asn378 is glycosylated (N-linked (GlcNAc...) asparagine). Glu417 contacts a beta-D-glucoside. Glu417 (nucleophile) is an active-site residue. Asn435 carries an N-linked (GlcNAc...) asparagine glycan. A beta-D-glucoside contacts are provided by residues Trp466, 473–474, and Phe482; that span reads EW.

This sequence belongs to the glycosyl hydrolase 1 family. As to expression, expressed in stems and siliques.

The catalysed reaction is Hydrolysis of terminal, non-reducing beta-D-glucosyl residues with release of beta-D-glucose.. Functionally, hydrolyzes p-nitrophenyl beta-D-glucoside and natural glucosides such as syringin, coniferin and p-coumaryl alcohol glucoside. May be involved in lignification by hydrolyzing monolignol glucosides. The sequence is that of Beta-glucosidase 45 from Arabidopsis thaliana (Mouse-ear cress).